We begin with the raw amino-acid sequence, 1404 residues long: DNA-directed RNA polymerase subunit beta' (1404 aa).

Positions 70, 72, 85, and 88 each coordinate Zn(2+). Mg(2+) is bound by residues aspartate 460, aspartate 462, and aspartate 464. Zn(2+)-binding residues include cysteine 825, cysteine 899, cysteine 906, and cysteine 909.

The protein belongs to the RNA polymerase beta' chain family. As to quaternary structure, the RNAP catalytic core consists of 2 alpha, 1 beta, 1 beta' and 1 omega subunit. When a sigma factor is associated with the core the holoenzyme is formed, which can initiate transcription. Mg(2+) is required as a cofactor. Requires Zn(2+) as cofactor.

It catalyses the reaction RNA(n) + a ribonucleoside 5'-triphosphate = RNA(n+1) + diphosphate. Its function is as follows. DNA-dependent RNA polymerase catalyzes the transcription of DNA into RNA using the four ribonucleoside triphosphates as substrates. The chain is DNA-directed RNA polymerase subunit beta' from Nitrosomonas eutropha (strain DSM 101675 / C91 / Nm57).